Here is a 149-residue protein sequence, read N- to C-terminus: Ribonuclease pancreatic alpha-type (149 aa).

Residues 1-25 form the signal peptide; the sequence is MGLEKSFILFSLLVLVLGWVQPSLG. Residues lysine 32 and arginine 35 each coordinate substrate. Histidine 37 acts as the Proton acceptor in catalysis. 4 cysteine pairs are disulfide-bonded: cysteine 51-cysteine 109, cysteine 65-cysteine 120, cysteine 83-cysteine 135, and cysteine 90-cysteine 97. Substrate-binding positions include 66–70, lysine 91, and arginine 110; that span reads KPVNT. The active-site Proton donor is the histidine 144.

The protein belongs to the pancreatic ribonuclease family. In terms of assembly, monomer.

The protein resides in the secreted. The catalysed reaction is an [RNA] containing cytidine + H2O = an [RNA]-3'-cytidine-3'-phosphate + a 5'-hydroxy-ribonucleotide-3'-[RNA].. It catalyses the reaction an [RNA] containing uridine + H2O = an [RNA]-3'-uridine-3'-phosphate + a 5'-hydroxy-ribonucleotide-3'-[RNA].. Functionally, endonuclease that catalyzes the cleavage of RNA on the 3' side of pyrimidine nucleotides. Acts on single-stranded and double-stranded RNA. The chain is Ribonuclease pancreatic alpha-type from Rattus fuscipes (Bush rat).